A 68-amino-acid polypeptide reads, in one-letter code: DNA-directed RNA polymerase subunit omega (68 aa).

It belongs to the RNA polymerase subunit omega family. The RNAP catalytic core consists of 2 alpha, 1 beta, 1 beta' and 1 omega subunit. When a sigma factor is associated with the core the holoenzyme is formed, which can initiate transcription.

The catalysed reaction is RNA(n) + a ribonucleoside 5'-triphosphate = RNA(n+1) + diphosphate. Promotes RNA polymerase assembly. Latches the N- and C-terminal regions of the beta' subunit thereby facilitating its interaction with the beta and alpha subunits. The protein is DNA-directed RNA polymerase subunit omega of Persephonella marina (strain DSM 14350 / EX-H1).